We begin with the raw amino-acid sequence, 689 residues long: Glycine--tRNA ligase beta subunit (689 aa).

The protein belongs to the class-II aminoacyl-tRNA synthetase family. Tetramer of two alpha and two beta subunits.

The protein localises to the cytoplasm. It carries out the reaction tRNA(Gly) + glycine + ATP = glycyl-tRNA(Gly) + AMP + diphosphate. The protein is Glycine--tRNA ligase beta subunit of Dichelobacter nodosus (strain VCS1703A).